The sequence spans 291 residues: Acetyl-coenzyme A carboxylase carboxyl transferase subunit beta (291 aa).

Positions 29 to 291 constitute a CoA carboxyltransferase N-terminal domain; it reads IMTKCPQCKK…TGGEREWLEN (263 aa). Zn(2+) is bound by residues C33, C36, C52, and C55. Residues 33–55 form a C4-type zinc finger; sequence CPQCKKIMLTKELDKNLRVCMNC.

It belongs to the AccD/PCCB family. As to quaternary structure, acetyl-CoA carboxylase is a heterohexamer composed of biotin carboxyl carrier protein (AccB), biotin carboxylase (AccC) and two subunits each of ACCase subunit alpha (AccA) and ACCase subunit beta (AccD). Zn(2+) is required as a cofactor.

It localises to the cytoplasm. It carries out the reaction N(6)-carboxybiotinyl-L-lysyl-[protein] + acetyl-CoA = N(6)-biotinyl-L-lysyl-[protein] + malonyl-CoA. Its pathway is lipid metabolism; malonyl-CoA biosynthesis; malonyl-CoA from acetyl-CoA: step 1/1. Functionally, component of the acetyl coenzyme A carboxylase (ACC) complex. Biotin carboxylase (BC) catalyzes the carboxylation of biotin on its carrier protein (BCCP) and then the CO(2) group is transferred by the transcarboxylase to acetyl-CoA to form malonyl-CoA. This chain is Acetyl-coenzyme A carboxylase carboxyl transferase subunit beta, found in Bacillus pumilus (strain SAFR-032).